Consider the following 345-residue polypeptide: Uroporphyrinogen decarboxylase (345 aa).

Substrate contacts are provided by residues 30–34 (RQAGR), aspartate 79, tyrosine 154, serine 209, and histidine 322.

Belongs to the uroporphyrinogen decarboxylase family. As to quaternary structure, homodimer.

The protein resides in the cytoplasm. The catalysed reaction is uroporphyrinogen III + 4 H(+) = coproporphyrinogen III + 4 CO2. Its pathway is porphyrin-containing compound metabolism; protoporphyrin-IX biosynthesis; coproporphyrinogen-III from 5-aminolevulinate: step 4/4. In terms of biological role, catalyzes the decarboxylation of four acetate groups of uroporphyrinogen-III to yield coproporphyrinogen-III. The sequence is that of Uroporphyrinogen decarboxylase from Nocardioides sp. (strain ATCC BAA-499 / JS614).